The sequence spans 566 residues: Mitochondrial distribution and morphology protein 34 (566 aa).

In terms of domain architecture, SMP-LTD spans 1–195 (MAFNFNWSPL…LPAIIHRLSL (195 aa)). Disordered regions lie at residues 212–237 (PEQT…DSLG), 349–401 (GYGL…NPSV), 432–518 (PERR…SSST), and 539–566 (KLMP…AYGQ). The segment covering 358–370 (RHSKAHSRKRKKR) has biased composition (basic residues). The span at 380-401 (TSDTASVSDESAYTETASNPSV) shows a compositional bias: polar residues. The span at 444–454 (PRRDIATEMLR) shows a compositional bias: basic and acidic residues.

Belongs to the MDM34 family. In terms of assembly, component of the ER-mitochondria encounter structure (ERMES) or MDM complex, composed of mmm1, mdm10, mdm12 and mdm34.

Its subcellular location is the mitochondrion outer membrane. In terms of biological role, component of the ERMES/MDM complex, which serves as a molecular tether to connect the endoplasmic reticulum (ER) and mitochondria. Components of this complex are involved in the control of mitochondrial shape and protein biogenesis, and function in nonvesicular lipid trafficking between the ER and mitochondria. Mdm34 is required for the interaction of the ER-resident membrane protein mmm1 and the outer mitochondrial membrane-resident beta-barrel protein mdm10. The polypeptide is Mitochondrial distribution and morphology protein 34 (Aspergillus flavus (strain ATCC 200026 / FGSC A1120 / IAM 13836 / NRRL 3357 / JCM 12722 / SRRC 167)).